A 218-amino-acid chain; its full sequence is Ropporin-1-like protein (218 aa).

The RIIa domain maps to 17–54 (PELPDILKQFTKAAIRTQPADVLQWSAGYFSALSRGDP).

It belongs to the ropporin family. Component of the axonemal radial spoke complex 1 (RS1), at least composed of spoke head proteins RSPH1, RSPH3, RSPH9 and the cilia-specific component RSPH4A or sperm-specific component RSPH6A, spoke stalk proteins RSPH14, DNAJB13, DYDC1, ROPN1L and NME5, and the anchor protein IQUB. May interact with AKAP3. Interacts with FSCB; the interaction increases upon spermatozoa capacitation conditions. Interacts with CFAP61. Post-translationally, sumoylated, sumoylation decreases upon spermatozoa capacitation conditions. In terms of tissue distribution, testis-specific. Expression is restricted to germ cells.

It is found in the cell projection. The protein resides in the cilium. It localises to the flagellum. Functions as part of axonemal radial spoke complexes that play an important part in the motility of sperm and cilia. Important for male fertility. With ROPN1, involved in fibrous sheath integrity and sperm motility, plays a role in PKA-dependent signaling processes required for spermatozoa capacitation. In Mus musculus (Mouse), this protein is Ropporin-1-like protein (Ropn1l).